The following is a 708-amino-acid chain: Lactotransferrin (708 aa).

The N-terminal stretch at 1 to 19 (MKLFFPALLSLGALGLCLA) is a signal peptide. Transferrin-like domains follow at residues 25-352 (VRWC…GLRE) and 364-693 (VVWC…KLRR). 2 disulfide bridges follow: Cys-28–Cys-64 and Cys-38–Cys-55. Residues 44–51 (RMKKVRGP) are interaction with E.coli ompC. Residue Asp-79 participates in Fe(3+) binding. Lys-92 is an active-site residue. Tyr-111 is a Fe(3+) binding site. Intrachain disulfides connect Cys-134–Cys-217, Cys-176–Cys-192, Cys-179–Cys-202, Cys-189–Cys-200, and Cys-250–Cys-264. 4 residues coordinate hydrogencarbonate: Thr-136, Arg-140, Ala-142, and Gly-143. Residue Tyr-211 coordinates Fe(3+). The N-linked (GlcNAc...) asparagine glycan is linked to Asn-252. Residue His-272 participates in Fe(3+) binding. Ser-278 serves as the catalytic Nucleophile. 2 cysteine pairs are disulfide-bonded: Cys-367/Cys-399 and Cys-377/Cys-390. The N-linked (GlcNAc...) asparagine glycan is linked to Asn-385. The Fe(3+) site is built by Asp-414 and Tyr-452. 8 disulfides stabilise this stretch: Cys-424/Cys-703, Cys-444/Cys-666, Cys-476/Cys-551, Cys-500/Cys-694, Cys-510/Cys-524, Cys-521/Cys-534, Cys-592/Cys-606, and Cys-644/Cys-649. Hydrogencarbonate is bound by residues Thr-478, Arg-482, Ala-484, and Gly-485. The N-linked (GlcNAc...) asparagine glycan is linked to Asn-537. Tyr-545 serves as a coordination point for Fe(3+). Asn-594 carries an N-linked (GlcNAc...) asparagine glycan. His-614 contacts Fe(3+).

It belongs to the transferrin family. In terms of assembly, monomer. Found in a complex with LTF, CLU, EPPIN and SEMG1. Interacts with E.coli outer membrane protein C (OmpC). Found in a complex with MPO and LTF; interacts directly with CP, allows Fe(3+) incorporation into LTF and activation of CP ferroxidase activity. Post-translationally, poly-N-acetyllactosaminic carbohydrate moiety seems to be needed for TLR4 activation.

The protein resides in the secreted. Its subcellular location is the cytoplasmic granule. Functionally, transferrins are iron binding transport proteins which can bind two Fe(3+) ions in association with the binding of an anion, usually bicarbonate. Major iron-binding and multifunctional protein found in exocrine fluids such as breast milk and mucosal secretions. Has antimicrobial activity, which depends on the extracellular cation concentration. Antimicrobial properties include bacteriostasis, which is related to its ability to sequester free iron and thus inhibit microbial growth, as well as direct bactericidal properties leading to the release of lipopolysaccharides from the bacterial outer membrane. Can also prevent bacterial biofilm development in P.aeruginosa infection. Has weak antifungal activity against C.albicans. Has anabolic, differentiating and anti-apoptotic effects on osteoblasts and can also inhibit osteoclastogenesis, possibly playing a role in the regulation of bone growth. Promotes binding of species C adenoviruses to epithelial cells, promoting adenovirus infection. Can inhibit papillomavirus infections. Stimulates the TLR4 signaling pathway leading to NF-kappa-B activation and subsequent pro-inflammatory cytokine production while also interfering with the lipopolysaccharide (LPS)-stimulated TLR4 signaling. Inhibits neutrophil granulocyte migration to sites of apoptosis, when secreted by apoptotic cells. Stimulates VEGFA-mediated endothelial cell migration and proliferation. Binds heparin, chondroitin sulfate and possibly other glycosaminoglycans (GAGs). Also binds specifically to pneumococcal surface protein A (PspA), the lipid A portion of bacterial lipopolysaccharide (LPS), lysozyme and DNA. Its function is as follows. Lactoferricin binds to the bacterial surface and is crucial for the bactericidal functions. Has some antiviral activity against papillomavirus infection. N-terminal region shows strong antifungal activity against C.albicans. Contains two BBXB heparin-binding consensus sequences that appear to form the predominate functional GAG-binding site. In terms of biological role, the lactotransferrin transferrin-like domain 1 functions as a serine protease of the peptidase S60 family that cuts arginine rich regions. This function contributes to the antimicrobial activity. Shows a preferential cleavage at -Arg-Ser-Arg-Arg-|- and -Arg-Arg-Ser-Arg-|-, and of Z-Phe-Arg-|-aminomethylcoumarin sites. The chain is Lactotransferrin (LTF) from Camelus dromedarius (Dromedary).